The chain runs to 443 residues: Endoplasmic reticulum protein SC65 (443 aa).

Residues 1 to 18 (MARAAWGLLWLLLGSAGA) form the signal peptide. A disordered region spans residues 81-102 (SGPATSQPRPAPGPDGDNEGDG). Asn-367 carries N-linked (GlcNAc...) asparagine glycosylation. Acidic residues-rich tracts occupy residues 387–398 (DEMELEETESLP), 407–419 (AEFE…EEGL), and 431–443 (GDED…PELA). Residues 387–443 (DEMELEETESLPEPEKPLSDAEFEGEGDYEEGLYADWWQEPDAKGDEDEAEPEPELA) form a disordered region.

This sequence belongs to the leprecan family. Interacts with PLOD1, P3H3 and PPIB. Identified in a complex with PLOD1 and P3H3. As to expression, found in testis, brain, heart and at a much lower level in liver.

It is found in the endoplasmic reticulum. In terms of biological role, part of a complex composed of PLOD1, P3H3 and P3H4 that catalyzes hydroxylation of lysine residues in collagen alpha chains and is required for normal assembly and cross-linking of collagen fibrils. Required for normal bone density and normal skin stability via its role in hydroxylation of lysine residues in collagen alpha chains and in collagen fibril assembly. The sequence is that of Endoplasmic reticulum protein SC65 from Rattus norvegicus (Rat).